The chain runs to 281 residues: Aminoglycoside N(3)-acetyltransferase IX (281 aa).

The protein belongs to the antibiotic N-acetyltransferase family.

The catalysed reaction is a 2-deoxystreptamine antibiotic + acetyl-CoA = an N(3)-acetyl-2-deoxystreptamine antibiotic + CoA + H(+). Functionally, resistance to neomycin. The chain is Aminoglycoside N(3)-acetyltransferase IX (aacC9) from Micromonospora chalcea.